A 218-amino-acid chain; its full sequence is Cell division protein SepF (218 aa).

The tract at residues 20-81 (DDEYYDDRAP…GYRGGYADEP (62 aa)) is disordered. The segment covering 36 to 65 (PRFDDDYGRYDGRDYDDARSDSRGDLRGEP) has biased composition (basic and acidic residues).

The protein belongs to the SepF family. In terms of assembly, homodimer. Interacts with FtsZ.

It is found in the cytoplasm. In terms of biological role, cell division protein that is part of the divisome complex and is recruited early to the Z-ring. Probably stimulates Z-ring formation, perhaps through the cross-linking of FtsZ protofilaments. Its function overlaps with FtsA. The chain is Cell division protein SepF from Mycobacterium bovis (strain ATCC BAA-935 / AF2122/97).